Reading from the N-terminus, the 950-residue chain is Protein translocase subunit SecA 1 (950 aa).

ATP-binding positions include Q83, 101–105, and D490; that span reads GEGKT. Residues 864–950 form a disordered region; sequence EGGAGRKNAA…AKPPKSVKKR (87 aa). Over residues 873–888 the composition is skewed to basic and acidic residues; the sequence is AAREEAPSRLRAKGIE.

The protein belongs to the SecA family. In terms of assembly, monomer and homodimer. Part of the essential Sec protein translocation apparatus which comprises SecA, SecYEG and auxiliary proteins SecDF. Other proteins may also be involved.

It is found in the cell membrane. The protein resides in the cytoplasm. It carries out the reaction ATP + H2O + cellular proteinSide 1 = ADP + phosphate + cellular proteinSide 2.. Part of the Sec protein translocase complex. Interacts with the SecYEG preprotein conducting channel. Has a central role in coupling the hydrolysis of ATP to the transfer of proteins into and across the cell membrane, serving as an ATP-driven molecular motor driving the stepwise translocation of polypeptide chains across the membrane. This is Protein translocase subunit SecA 1 from Mycobacterium ulcerans (strain Agy99).